A 521-amino-acid chain; its full sequence is GMP synthase [glutamine-hydrolyzing] (521 aa).

The region spanning 5 to 203 (KILILDFGSQ…VHEICGCGRD (199 aa)) is the Glutamine amidotransferase type-1 domain. Cys82 serves as the catalytic Nucleophile. Active-site residues include His177 and Glu179. Residues 204–396 (WNMPDYVNEA…LGLPHEMVYR (193 aa)) enclose the GMPS ATP-PPase domain. 231–237 (SGGVDSS) contacts ATP.

As to quaternary structure, homodimer.

It carries out the reaction XMP + L-glutamine + ATP + H2O = GMP + L-glutamate + AMP + diphosphate + 2 H(+). It participates in purine metabolism; GMP biosynthesis; GMP from XMP (L-Gln route): step 1/1. Functionally, catalyzes the synthesis of GMP from XMP. The sequence is that of GMP synthase [glutamine-hydrolyzing] from Aromatoleum aromaticum (strain DSM 19018 / LMG 30748 / EbN1) (Azoarcus sp. (strain EbN1)).